The chain runs to 229 residues: Mediator of RNA polymerase II transcription subunit 7 (229 aa).

This sequence belongs to the Mediator complex subunit 7 family. Component of the Mediator complex.

Its subcellular location is the nucleus. Its function is as follows. Component of the Mediator complex, a coactivator involved in the regulated transcription of nearly all RNA polymerase II-dependent genes. Mediator functions as a bridge to convey information from gene-specific regulatory proteins to the basal RNA polymerase II transcription machinery. Mediator is recruited to promoters by direct interactions with regulatory proteins and serves as a scaffold for the assembly of a functional preinitiation complex with RNA polymerase II and the general transcription factors. The chain is Mediator of RNA polymerase II transcription subunit 7 (med7) from Xenopus tropicalis (Western clawed frog).